The primary structure comprises 62 residues: Metallothionein-4 (62 aa).

20 residues coordinate a divalent metal cation: cysteine 6, cysteine 8, cysteine 14, cysteine 16, cysteine 20, cysteine 22, cysteine 25, cysteine 27, cysteine 30, cysteine 34, cysteine 35, cysteine 37, cysteine 38, cysteine 42, cysteine 45, cysteine 49, cysteine 51, cysteine 58, cysteine 60, and cysteine 61.

It belongs to the metallothionein superfamily. Type 1 family.

In terms of biological role, seems to bind zinc and copper. Could play a special role in regulating zinc metabolism during the differentiation of stratified epithelia. The chain is Metallothionein-4 (MT4) from Canis lupus familiaris (Dog).